Consider the following 679-residue polypeptide: Protein hook (679 aa).

Residues 6–123 form the Calponin-homology (CH) domain; it reads NEMYYSLLEW…RLLQLVLGCA (118 aa). Coiled-coil stretches lie at residues 135–437 and 480–574; these read EIMC…LKCG and QTAL…QEIL.

This sequence belongs to the hook family. Homodimer. Interacts with microtubules via its N-terminus.

It is found in the cytoplasm. The protein localises to the cytoskeleton. Its subcellular location is the endosome. The protein resides in the synapse. Functionally, involved in endocytic trafficking by stabilizing organelles of the endocytic pathway. Probably acts as a cytoskeletal linker protein required to tether endosome vesicles to the cytoskeleton. Involved in modulation of endocytosis at stages required for down-regulation of membrane proteins that control synapse size. Not involved in synaptic vesicle recycling. Required in R7 cells for boss endocytosis into multivesicular bodies (MVBs). Has a role in regulating adult longevity. The polypeptide is Protein hook (Drosophila simulans (Fruit fly)).